Reading from the N-terminus, the 79-residue chain is Putative defensin-like protein 29 (79 aa).

Positions M1 to A26 are cleaved as a signal peptide. 3 cysteine pairs are disulfide-bonded: C45/C65, C51/C74, and C55/C76.

The protein belongs to the DEFL family.

It localises to the secreted. The sequence is that of Putative defensin-like protein 29 from Arabidopsis thaliana (Mouse-ear cress).